The chain runs to 322 residues: Light-dependent protochlorophyllide reductase (322 aa).

Belongs to the short-chain dehydrogenases/reductases (SDR) family. POR subfamily.

It catalyses the reaction chlorophyllide a + NADP(+) = protochlorophyllide a + NADPH + H(+). The protein operates within porphyrin-containing compound metabolism; chlorophyll biosynthesis. Its function is as follows. Phototransformation of protochlorophyllide (Pchlide) to chlorophyllide (Chlide). This chain is Light-dependent protochlorophyllide reductase (por), found in Synechocystis sp. (strain ATCC 27184 / PCC 6803 / Kazusa).